We begin with the raw amino-acid sequence, 902 residues long: Ribonuclease E (902 aa).

In terms of domain architecture, S1 motif spans 39 to 119 (SNIYKGKITR…GTKGAALTTF (81 aa)). Mg(2+) contacts are provided by Asp-303 and Asp-346. Zn(2+) contacts are provided by Cys-404 and Cys-407. A required for zinc-mediated homotetramerization and catalytic activity region spans residues 404-407 (CPRC). The segment at 881–902 (GKNSAGVHSATNFSNSPVSKLK) is disordered. The span at 889–902 (SATNFSNSPVSKLK) shows a compositional bias: polar residues.

This sequence belongs to the RNase E/G family. RNase E subfamily. Component of the RNA degradosome, which is a multiprotein complex involved in RNA processing and mRNA degradation. Within the RNA degradosome, RNase E assembles into a homotetramer formed by a dimer of dimers. The cofactor is Zn(2+). Requires Mg(2+) as cofactor.

The protein localises to the cytoplasm. It localises to the cell inner membrane. It carries out the reaction Endonucleolytic cleavage of single-stranded RNA in A- and U-rich regions.. In terms of biological role, endoribonuclease that plays a central role in RNA processing and decay. Required for the maturation of 5S and 16S rRNAs and the majority of tRNAs. Also involved in the degradation of most mRNAs. This chain is Ribonuclease E, found in Buchnera aphidicola subsp. Acyrthosiphon pisum (strain APS) (Acyrthosiphon pisum symbiotic bacterium).